The chain runs to 142 residues: Peptide methionine sulfoxide reductase MsrB (142 aa).

One can recognise a MsrB domain in the interval 3–126 (KEKLKKKLSL…NSAALRFVPF (124 aa)). The Nucleophile role is filled by Cys-115.

This sequence belongs to the MsrB Met sulfoxide reductase family.

It carries out the reaction L-methionyl-[protein] + [thioredoxin]-disulfide + H2O = L-methionyl-(R)-S-oxide-[protein] + [thioredoxin]-dithiol. The protein is Peptide methionine sulfoxide reductase MsrB of Lactococcus lactis subsp. lactis (strain IL1403) (Streptococcus lactis).